We begin with the raw amino-acid sequence, 263 residues long: Endonuclease NucS (263 aa).

It belongs to the NucS endonuclease family.

Its subcellular location is the cytoplasm. Its function is as follows. Cleaves both 3' and 5' ssDNA extremities of branched DNA structures. The sequence is that of Endonuclease NucS from Methanocaldococcus jannaschii (strain ATCC 43067 / DSM 2661 / JAL-1 / JCM 10045 / NBRC 100440) (Methanococcus jannaschii).